The chain runs to 703 residues: MFEHKIFKMDFAGRELSVEIGKICEMASGSCIVRYSDSMVMVNTTKSAKPRDGIDFFPLSVDYEEKLYSVGKIPGGFLKREGKPSEKAILTSRLIDRPIRPLFPKGFRNDVQVVATVLSVDQDCTPDIVAMIGSSIALSISDIPFNGPTGSVCVGLVDGAFVVNPNAEQREKSSMHLVVSGTKEAIMMVEAGADEVPDEVMLDAILFAHQEIKKIVEFIEGIVAEVGKEKMPVELYHAGEEITQLVREFATDKMKKAVQTFEKLERMENMDRVKEETLAHFEETLEDFEDFVGDIEEVLQDIIKEEVRKLIVHENVRPDNRKLEEIRPIWCETGMIPRAHGSAIFTRGQTQVLNVATLGALGDVQKLDGLDEEENKRYMHHYNFPAYSVGEARPSRGPGRREIGHGALAERALLPVIPSQEEFPYAIRLVSEVLSSNGSTSQASVCGSTLSLLDAGVPIKDMVAGIAMGLIKHDGKVAVLSDIQGMEDHLGDMDFKVAGTEYGITAIQMDIKIDGIDKEILQRALKQAKEGRIHILGEMRKTISQPKPELSPYAPKIVKMQINPDKIKDVIGPGGKIITKIIDETGVKIDIEQTGEVFISGIEIDMIKKAQELINNIVVEPEVGKTYKGKVSRIMNFGAFVEILPGKEGLLHISHIAHERVAKVEDVLNIGDEVEVKVTEIDEKGRVNLSRKVLLPKPEHKNK.

Mg(2+) is bound by residues Asp-488 and Asp-494. Residues 555–614 (PKIVKMQINPDKIKDVIGPGGKIITKIIDETGVKIDIEQTGEVFISGIEIDMIKKAQELI) form the KH domain. An S1 motif domain is found at 624–692 (GKTYKGKVSR…EKGRVNLSRK (69 aa)).

The protein belongs to the polyribonucleotide nucleotidyltransferase family. Mg(2+) is required as a cofactor.

The protein localises to the cytoplasm. It catalyses the reaction RNA(n+1) + phosphate = RNA(n) + a ribonucleoside 5'-diphosphate. Its function is as follows. Involved in mRNA degradation. Catalyzes the phosphorolysis of single-stranded polyribonucleotides processively in the 3'- to 5'-direction. This is Polyribonucleotide nucleotidyltransferase from Clostridioides difficile (strain 630) (Peptoclostridium difficile).